A 171-amino-acid polypeptide reads, in one-letter code: Ferritin heavy chain (171 aa).

The residue at position 1 (Met1) is an N-acetylmethionine. At Thr2 the chain carries N-acetylthreonine; in Ferritin heavy chain, N-terminally processed. Residues 11 to 160 (QNYHQDSEAA…DHITNLRKMG (150 aa)) enclose the Ferritin-like diiron domain. Positions 28, 63, 66, 108, and 142 each coordinate Fe cation.

It belongs to the ferritin family. As to quaternary structure, oligomer of 24 subunits. There are two types of subunits: L (light) chain and H (heavy) chain. The major chain can be light or heavy, depending on the species and tissue type. The functional molecule forms a roughly spherical shell with a diameter of 12 nm and contains a central cavity into which the insoluble mineral iron core is deposited. Interacts with NCOA4; NCOA4 promotes targeting of the iron-binding ferritin complex to autolysosomes following starvation or iron depletion.

Its subcellular location is the cytoplasm. The protein localises to the lysosome. The protein resides in the cytoplasmic vesicle. It is found in the autophagosome. It catalyses the reaction 4 Fe(2+) + O2 + 4 H(+) = 4 Fe(3+) + 2 H2O. Its function is as follows. Stores iron in a soluble, non-toxic, readily available form. Important for iron homeostasis. Has ferroxidase activity. Iron is taken up in the ferrous form and deposited as ferric hydroxides after oxidation. Also plays a role in delivery of iron to cells. Mediates iron uptake in capsule cells of the developing kidney. Delivery to lysosomes is mediated by the cargo receptor NCOA4 for autophagic degradation and release of iron. The protein is Ferritin heavy chain (FTH1) of Ovis aries (Sheep).